The chain runs to 274 residues: Diaminopimelate epimerase (274 aa).

Residues N13, Q47, and N65 each contribute to the substrate site. C74 (proton donor) is an active-site residue. Substrate is bound by residues 75 to 76 (GN), N149, N182, and 200 to 201 (ER). Catalysis depends on C209, which acts as the Proton acceptor. Residue 210–211 (GT) coordinates substrate.

It belongs to the diaminopimelate epimerase family. Homodimer.

It is found in the cytoplasm. It catalyses the reaction (2S,6S)-2,6-diaminopimelate = meso-2,6-diaminopimelate. It functions in the pathway amino-acid biosynthesis; L-lysine biosynthesis via DAP pathway; DL-2,6-diaminopimelate from LL-2,6-diaminopimelate: step 1/1. Its function is as follows. Catalyzes the stereoinversion of LL-2,6-diaminopimelate (L,L-DAP) to meso-diaminopimelate (meso-DAP), a precursor of L-lysine and an essential component of the bacterial peptidoglycan. This chain is Diaminopimelate epimerase, found in Rhizorhabdus wittichii (strain DSM 6014 / CCUG 31198 / JCM 15750 / NBRC 105917 / EY 4224 / RW1) (Sphingomonas wittichii).